The following is a 208-amino-acid chain: ATP phosphoribosyltransferase (208 aa).

This sequence belongs to the ATP phosphoribosyltransferase family. Short subfamily. Heteromultimer composed of HisG and HisZ subunits.

Its subcellular location is the cytoplasm. It catalyses the reaction 1-(5-phospho-beta-D-ribosyl)-ATP + diphosphate = 5-phospho-alpha-D-ribose 1-diphosphate + ATP. The protein operates within amino-acid biosynthesis; L-histidine biosynthesis; L-histidine from 5-phospho-alpha-D-ribose 1-diphosphate: step 1/9. Functionally, catalyzes the condensation of ATP and 5-phosphoribose 1-diphosphate to form N'-(5'-phosphoribosyl)-ATP (PR-ATP). Has a crucial role in the pathway because the rate of histidine biosynthesis seems to be controlled primarily by regulation of HisG enzymatic activity. The chain is ATP phosphoribosyltransferase from Thermotoga neapolitana (strain ATCC 49049 / DSM 4359 / NBRC 107923 / NS-E).